The sequence spans 114 residues: SOSS complex subunit C homolog (114 aa).

The segment covering Met-1–Glu-10 has biased composition (polar residues). Residues Met-1–His-61 are disordered.

The protein belongs to the SOSS-C family.

The chain is SOSS complex subunit C homolog from Nematostella vectensis (Starlet sea anemone).